A 273-amino-acid chain; its full sequence is Putative phosphoenolpyruvate synthase regulatory protein (273 aa).

Residue 153–160 (AVSRAGKT) participates in ADP binding.

Belongs to the pyruvate, phosphate/water dikinase regulatory protein family. PSRP subfamily.

It catalyses the reaction [pyruvate, water dikinase] + ADP = [pyruvate, water dikinase]-phosphate + AMP + H(+). The enzyme catalyses [pyruvate, water dikinase]-phosphate + phosphate + H(+) = [pyruvate, water dikinase] + diphosphate. In terms of biological role, bifunctional serine/threonine kinase and phosphorylase involved in the regulation of the phosphoenolpyruvate synthase (PEPS) by catalyzing its phosphorylation/dephosphorylation. This chain is Putative phosphoenolpyruvate synthase regulatory protein, found in Xylella fastidiosa (strain M23).